The chain runs to 151 residues: Deoxyuridine 5'-triphosphate nucleotidohydrolase (151 aa).

Substrate contacts are provided by residues 70–72 (RSG), Asn83, 87–89 (LID), and Met97.

It belongs to the dUTPase family. The cofactor is Mg(2+).

It catalyses the reaction dUTP + H2O = dUMP + diphosphate + H(+). It functions in the pathway pyrimidine metabolism; dUMP biosynthesis; dUMP from dCTP (dUTP route): step 2/2. Its function is as follows. This enzyme is involved in nucleotide metabolism: it produces dUMP, the immediate precursor of thymidine nucleotides and it decreases the intracellular concentration of dUTP so that uracil cannot be incorporated into DNA. This chain is Deoxyuridine 5'-triphosphate nucleotidohydrolase, found in Pseudomonas syringae pv. syringae (strain B728a).